The primary structure comprises 520 residues: Ribonuclease Y (520 aa).

The chain crosses the membrane as a helical span at residues 1-21 (MDIITIIIAVIAGIGGGFGIS). The 67-residue stretch at 210 to 276 (CVSVFNIESD…RLALHKLVTD (67 aa)) folds into the KH domain. The HD domain maps to 336–429 (LLQHSREVSK…VQVCDAISGA (94 aa)).

The protein belongs to the RNase Y family.

It localises to the cell membrane. Its function is as follows. Endoribonuclease that initiates mRNA decay. The polypeptide is Ribonuclease Y (Flavobacterium psychrophilum (strain ATCC 49511 / DSM 21280 / CIP 103535 / JIP02/86)).